The sequence spans 223 residues: Endonuclease V (223 aa).

2 residues coordinate Mg(2+): Asp-44 and Asp-109.

This sequence belongs to the endonuclease V family. It depends on Mg(2+) as a cofactor.

The protein localises to the cytoplasm. It catalyses the reaction Endonucleolytic cleavage at apurinic or apyrimidinic sites to products with a 5'-phosphate.. In terms of biological role, DNA repair enzyme involved in the repair of deaminated bases. Selectively cleaves double-stranded DNA at the second phosphodiester bond 3' to a deoxyinosine leaving behind the intact lesion on the nicked DNA. The polypeptide is Endonuclease V (Methanothrix thermoacetophila (strain DSM 6194 / JCM 14653 / NBRC 101360 / PT) (Methanosaeta thermophila)).